The sequence spans 169 residues: Small ribosomal subunit protein uS9 (169 aa).

2 disordered regions span residues 1-29 and 128-169; these read MVEPTGIEDVQEYDENSEEYPAEYTTETP and MDPE…YSKR. The span at 9-21 shows a compositional bias: acidic residues; it reads DVQEYDENSEEYP. The span at 150–169 shows a compositional bias: basic residues; it reads VERKKAGLKKARKAPQYSKR.

This sequence belongs to the universal ribosomal protein uS9 family.

The chain is Small ribosomal subunit protein uS9 from Thermobifida fusca (strain YX).